A 302-amino-acid chain; its full sequence is Sulfate adenylyltransferase subunit 2 (302 aa).

Residues 280 to 302 form a disordered region; the sequence is RQGRAIDHDQSGSMELKKRQGYF.

Belongs to the PAPS reductase family. CysD subfamily. As to quaternary structure, heterodimer composed of CysD, the smaller subunit, and CysN.

It catalyses the reaction sulfate + ATP + H(+) = adenosine 5'-phosphosulfate + diphosphate. It functions in the pathway sulfur metabolism; hydrogen sulfide biosynthesis; sulfite from sulfate: step 1/3. Its function is as follows. With CysN forms the ATP sulfurylase (ATPS) that catalyzes the adenylation of sulfate producing adenosine 5'-phosphosulfate (APS) and diphosphate, the first enzymatic step in sulfur assimilation pathway. APS synthesis involves the formation of a high-energy phosphoric-sulfuric acid anhydride bond driven by GTP hydrolysis by CysN coupled to ATP hydrolysis by CysD. The protein is Sulfate adenylyltransferase subunit 2 of Vibrio vulnificus (strain CMCP6).